A 215-amino-acid polypeptide reads, in one-letter code: Large ribosomal subunit protein uL3 (215 aa).

Gln156 bears the N5-methylglutamine mark.

This sequence belongs to the universal ribosomal protein uL3 family. In terms of assembly, part of the 50S ribosomal subunit. Forms a cluster with proteins L14 and L19. Post-translationally, methylated by PrmB.

Functionally, one of the primary rRNA binding proteins, it binds directly near the 3'-end of the 23S rRNA, where it nucleates assembly of the 50S subunit. The chain is Large ribosomal subunit protein uL3 from Xylella fastidiosa (strain 9a5c).